The chain runs to 216 residues: Holliday junction branch migration complex subunit RuvA (216 aa).

The domain I stretch occupies residues 1–64 (MISFIKGVLI…EDAQQLYGFK (64 aa)). Residues 65 to 143 (SKVDKKVFQE…KMANEIYAQT (79 aa)) form a domain II region. Residues 144 to 163 (SGTTTTSQDSQAQQAPTSVV) form a flexible linker region. Positions 164–216 (LANSIFNESVDALLALGYKQKDAEKMARSAMGDATTAAEVIRKALQGSIKSKR) are domain III.

This sequence belongs to the RuvA family. In terms of assembly, homotetramer. Forms an RuvA(8)-RuvB(12)-Holliday junction (HJ) complex. HJ DNA is sandwiched between 2 RuvA tetramers; dsDNA enters through RuvA and exits via RuvB. An RuvB hexamer assembles on each DNA strand where it exits the tetramer. Each RuvB hexamer is contacted by two RuvA subunits (via domain III) on 2 adjacent RuvB subunits; this complex drives branch migration. In the full resolvosome a probable DNA-RuvA(4)-RuvB(12)-RuvC(2) complex forms which resolves the HJ.

Its subcellular location is the cytoplasm. The RuvA-RuvB-RuvC complex processes Holliday junction (HJ) DNA during genetic recombination and DNA repair, while the RuvA-RuvB complex plays an important role in the rescue of blocked DNA replication forks via replication fork reversal (RFR). RuvA specifically binds to HJ cruciform DNA, conferring on it an open structure. The RuvB hexamer acts as an ATP-dependent pump, pulling dsDNA into and through the RuvAB complex. HJ branch migration allows RuvC to scan DNA until it finds its consensus sequence, where it cleaves and resolves the cruciform DNA. The chain is Holliday junction branch migration complex subunit RuvA from Francisella tularensis subsp. mediasiatica (strain FSC147).